Here is a 960-residue protein sequence, read N- to C-terminus: MSVCLTEEQKRKIEENRQRALARRAERLAAQQNTLKQTNNSHSTLFNIQKSTVEQGALFSGQRTNVTAACMAPLQQGSNNKYAFQKTSSGGSAASSLPGTAENKPQAGGNGPCDYKVPADPAQDFTSSKNLTGKYVAPKAHCVSSVPSFNDTPNPRQLNPACTTQEQEKPKNSSYSYSRPDSDTACDKFTAGPGPGPIRNTTAISKFYGANPGIKPALPVSNKTVSEVRDRGVTGSSVEAVPVKKASSSTRGRCVKHMEGRFRVEVGYSAELIALFKTIPSKAYDPATKMWNFGLEDYASLMSEVQRVQSVELKALEGMEGVQIAPPPTSGSGTNINALLAMCNNWQRPNATLRGRCILISRSRFEMEIGYHTEIIGLFKQMNTRNYDTKTRKWSFMLEDYQKLMESVRNIQQVEVEPLPRPVLQAFAPQFEKTTISLAEIEDVDLSHVDSKLIGNLMPFQRDGVNFAISREGRLLLADDMGLGKTIQAICIAAYYRKEWPLLVVAPSSVRFTWAEAFHRWLPSLNPESVNVIVTGRDSQSANLINIISFDLLGKMDKQIAANFKVIIIDESHFLKNVKTARCKAAMPLLKSAKRVMLLSGTPAMSRPAELYTQIAAVRPTFFPRFHDFGIRYCDAKQMPWGWDYSGSSNLNELKLLLEESIMIRRLKSEVLSQLPAKQRKMVVVAPEGITAKTKAALAAAAKEMAKGFKSKVQEKEALLLFYNRTAEAKIRSVLEYIIDLLESGREKFLVFAHHKLVLDNICEELGKKEVPYIRIDGNTSSADRQSLCHKFQFSEKSCVAVLSITAANMGLTLSSADLVVFAELFWNPGVLIQAEDRVHRIGQTSSVNIHYLVAKGTADDYLWPMIQEKIKVLGQAGLSEANFSETTESTDYFYKDPKQKTIYDLFQRSFSEQGAENDSDEALLLEACEEVDLGESTCGPTDYSGNACKRRKIDDYFAL.

Residues 5–41 (LTEEQKRKIEENRQRALARRAERLAAQQNTLKQTNNS) adopt a coiled-coil conformation. 2 disordered regions span residues 81-126 (KYAF…QDFT) and 145-182 (SVPS…RPDS). The span at 145–165 (SVPSFNDTPNPRQLNPACTTQ) shows a compositional bias: polar residues. 2 HARP domains span residues 246–317 (ASSS…KALE) and 349–420 (PNAT…EPLP). A Helicase ATP-binding domain is found at 466–621 (NFAISREGRL…YTQIAAVRPT (156 aa)). 479–486 (DDMGLGKT) is a binding site for ATP. A DESH box motif is present at residues 570–573 (DESH). Residues 665-682 (RRLKSEVLSQLPAKQRKM) carry the Nuclear localization signal motif. The Helicase C-terminal domain occupies 737-890 (YIIDLLESGR…EANFSETTES (154 aa)).

This sequence belongs to the SNF2/RAD54 helicase family. SMARCAL1 subfamily.

The protein localises to the nucleus. The enzyme catalyses ATP + H2O = ADP + phosphate + H(+). Its function is as follows. ATP-dependent annealing helicase that catalyzes the rewinding of the stably unwound DNA. Rewinds single-stranded DNA bubbles that are stably bound by replication protein A (RPA). Acts throughout the genome to reanneal stably unwound DNA, performing the opposite reaction of many enzymes, such as helicases and polymerases, that unwind DNA. This Xenopus laevis (African clawed frog) protein is SWI/SNF-related matrix-associated actin-dependent regulator of chromatin subfamily A-like protein 1 (smarcal1).